A 226-amino-acid chain; its full sequence is ATP synthase F(0) complex subunit a (226 aa).

N-formylmethionine is present on M1. The next 6 membrane-spanning stretches (helical) occupy residues F9–L29, W68–L88, Q97–F117, I138–V158, I164–I184, and A189–I209.

It belongs to the ATPase A chain family. Component of the ATP synthase complex composed at least of ATP5F1A/subunit alpha, ATP5F1B/subunit beta, ATP5MC1/subunit c (homooctomer), MT-ATP6/subunit a, MT-ATP8/subunit 8, ATP5ME/subunit e, ATP5MF/subunit f, ATP5MG/subunit g, ATP5MK/subunit k, ATP5MJ/subunit j, ATP5F1C/subunit gamma, ATP5F1D/subunit delta, ATP5F1E/subunit epsilon, ATP5PF/subunit F6, ATP5PB/subunit b, ATP5PD/subunit d, ATP5PO/subunit OSCP. ATP synthase complex consists of a soluble F(1) head domain (subunits alpha(3) and beta(3)) - the catalytic core - and a membrane F(0) domain - the membrane proton channel (subunits c, a, 8, e, f, g, k and j). These two domains are linked by a central stalk (subunits gamma, delta, and epsilon) rotating inside the F1 region and a stationary peripheral stalk (subunits F6, b, d, and OSCP). Interacts with DNAJC30; interaction is direct.

It is found in the mitochondrion inner membrane. The catalysed reaction is H(+)(in) = H(+)(out). Subunit a, of the mitochondrial membrane ATP synthase complex (F(1)F(0) ATP synthase or Complex V) that produces ATP from ADP in the presence of a proton gradient across the membrane which is generated by electron transport complexes of the respiratory chain. ATP synthase complex consist of a soluble F(1) head domain - the catalytic core - and a membrane F(1) domain - the membrane proton channel. These two domains are linked by a central stalk rotating inside the F(1) region and a stationary peripheral stalk. During catalysis, ATP synthesis in the catalytic domain of F(1) is coupled via a rotary mechanism of the central stalk subunits to proton translocation. With the subunit c (ATP5MC1), forms the proton-conducting channel in the F(0) domain, that contains two crucial half-channels (inlet and outlet) that facilitate proton movement from the mitochondrial intermembrane space (IMS) into the matrix. Protons are taken up via the inlet half-channel and released through the outlet half-channel, following a Grotthuss mechanism. The protein is ATP synthase F(0) complex subunit a of Bos taurus (Bovine).